Reading from the N-terminus, the 369-residue chain is S-(hydroxymethyl)glutathione dehydrogenase (369 aa).

Zn(2+)-binding residues include Cys-40, His-62, Cys-92, Cys-95, Cys-98, Cys-106, and Cys-169.

Belongs to the zinc-containing alcohol dehydrogenase family. Class-III subfamily. Homodimer. The cofactor is Zn(2+).

The protein resides in the cytoplasm. The enzyme catalyses S-(hydroxymethyl)glutathione + NADP(+) = S-formylglutathione + NADPH + H(+). The catalysed reaction is S-(hydroxymethyl)glutathione + NAD(+) = S-formylglutathione + NADH + H(+). It carries out the reaction a primary alcohol + NAD(+) = an aldehyde + NADH + H(+). It catalyses the reaction a secondary alcohol + NAD(+) = a ketone + NADH + H(+). The enzyme catalyses S-nitrosoglutathione + NADH + H(+) = S-(hydroxysulfenamide)glutathione + NAD(+). Has high formaldehyde dehydrogenase activity in the presence of glutathione and catalyzes the oxidation of normal alcohols in a reaction that is not GSH-dependent. In addition, hemithiolacetals other than those formed from GSH, including omega-thiol fatty acids, also are substrates. Also acts as a S-nitroso-glutathione reductase by catalyzing the NADH-dependent reduction of S-nitrosoglutathione. In Photobacterium damsela subsp. piscicida (Pasteurella piscicida), this protein is S-(hydroxymethyl)glutathione dehydrogenase (frmA).